Here is a 178-residue protein sequence, read N- to C-terminus: Nascent polypeptide-associated complex subunit alpha (178 aa).

Positions P16 to I80 constitute an NAC-A/B domain. The span at E82–A100 shows a compositional bias: low complexity. The tract at residues E82–I145 is disordered. Positions G101 to E126 are enriched in basic and acidic residues. Over residues D127–G139 the composition is skewed to acidic residues. Positions L140–S178 constitute a UBA domain.

Belongs to the NAC-alpha family. In terms of assembly, part of the nascent polypeptide-associated complex (NAC), consisting of EGD2 and EGD1. NAC associates with ribosomes via EGD1.

It is found in the cytoplasm. The protein resides in the nucleus. Component of the nascent polypeptide-associated complex (NAC), a dynamic component of the ribosomal exit tunnel, protecting the emerging polypeptides from interaction with other cytoplasmic proteins to ensure appropriate nascent protein targeting. The NAC complex also promotes mitochondrial protein import by enhancing productive ribosome interactions with the outer mitochondrial membrane and blocks the inappropriate interaction of ribosomes translating non-secretory nascent polypeptides with translocation sites in the membrane of the endoplasmic reticulum. EGD2 may also be involved in transcription regulation. This is Nascent polypeptide-associated complex subunit alpha (EGD2) from Candida albicans (strain SC5314 / ATCC MYA-2876) (Yeast).